The sequence spans 649 residues: 1-deoxy-D-xylulose-5-phosphate synthase 1 (649 aa).

Thiamine diphosphate contacts are provided by residues H79 and 120–122 (AHS). D151 is a binding site for Mg(2+). Thiamine diphosphate is bound by residues 152-153 (GS), N180, Y289, and E371. N180 serves as a coordination point for Mg(2+).

The protein belongs to the transketolase family. DXPS subfamily. Homodimer. Mg(2+) serves as cofactor. The cofactor is thiamine diphosphate.

It carries out the reaction D-glyceraldehyde 3-phosphate + pyruvate + H(+) = 1-deoxy-D-xylulose 5-phosphate + CO2. Its pathway is metabolic intermediate biosynthesis; 1-deoxy-D-xylulose 5-phosphate biosynthesis; 1-deoxy-D-xylulose 5-phosphate from D-glyceraldehyde 3-phosphate and pyruvate: step 1/1. Catalyzes the acyloin condensation reaction between C atoms 2 and 3 of pyruvate and glyceraldehyde 3-phosphate to yield 1-deoxy-D-xylulose-5-phosphate (DXP). This is 1-deoxy-D-xylulose-5-phosphate synthase 1 from Zymomonas mobilis subsp. mobilis (strain ATCC 31821 / ZM4 / CP4).